The sequence spans 360 residues: Peptide chain release factor 1 (360 aa).

Gln-234 carries the post-translational modification N5-methylglutamine.

Belongs to the prokaryotic/mitochondrial release factor family. In terms of processing, methylated by PrmC. Methylation increases the termination efficiency of RF1.

It localises to the cytoplasm. Peptide chain release factor 1 directs the termination of translation in response to the peptide chain termination codons UAG and UAA. The chain is Peptide chain release factor 1 from Clostridium botulinum (strain Eklund 17B / Type B).